A 689-amino-acid polypeptide reads, in one-letter code: Transcription factor BHLH42 (689 aa).

Disordered stretches follow at residues Ile-192–Val-287 and Asp-458–Val-489. The segment covering Glu-206–Val-217 has biased composition (polar residues). Over residues Glu-246–Asp-271 the composition is skewed to acidic residues. Positions Glu-483–Arg-496 are basic motif. A bHLH domain is found at Glu-483–Leu-532. The segment at Glu-497–Leu-532 is helix-loop-helix motif. The tract at residues Glu-547 to Arg-570 is disordered.

This sequence belongs to the bHLH protein family. In terms of assembly, interacts with MYB123. As to expression, expressed in the inner pericarp of maturing fruits.

The protein resides in the nucleus. Its function is as follows. Transcription activator involved in the spatiotemporal regulation of anthocyanin biosynthesis specifically in the inner pericarp of red-fleshed kiwifruits. Functions in association with MYB123 to activate the promoters of LDOX (ANS) and F3GT1 that encode the dedicated enzymes for anthocyanin biosynthesis. The sequence is that of Transcription factor BHLH42 from Actinidia chinensis var. chinensis (Chinese soft-hair kiwi).